We begin with the raw amino-acid sequence, 529 residues long: Bifunctional purine biosynthesis protein PurH (529 aa).

The 148-residue stretch at 1-148 (MQQRRPVRRA…KNHKDVAIVV (148 aa)) folds into the MGS-like domain. Lys-287 bears the N6-acetyllysine mark.

It belongs to the PurH family.

The catalysed reaction is (6R)-10-formyltetrahydrofolate + 5-amino-1-(5-phospho-beta-D-ribosyl)imidazole-4-carboxamide = 5-formamido-1-(5-phospho-D-ribosyl)imidazole-4-carboxamide + (6S)-5,6,7,8-tetrahydrofolate. It carries out the reaction IMP + H2O = 5-formamido-1-(5-phospho-D-ribosyl)imidazole-4-carboxamide. The protein operates within purine metabolism; IMP biosynthesis via de novo pathway; 5-formamido-1-(5-phospho-D-ribosyl)imidazole-4-carboxamide from 5-amino-1-(5-phospho-D-ribosyl)imidazole-4-carboxamide (10-formyl THF route): step 1/1. It functions in the pathway purine metabolism; IMP biosynthesis via de novo pathway; IMP from 5-formamido-1-(5-phospho-D-ribosyl)imidazole-4-carboxamide: step 1/1. The chain is Bifunctional purine biosynthesis protein PurH from Escherichia coli O157:H7.